A 1475-amino-acid polypeptide reads, in one-letter code: Gag-Pol polyprotein (1475 aa).

A compositionally biased stretch (low complexity) spans 130–147; the sequence is TQNTQNKKQTSNQTNTQS. Positions 130 to 159 are disordered; it reads TQNTQNKKQTSNQTNTQSLPAITTQDGTPR. 2 consecutive CCHC-type zinc fingers follow at residues 403–420 and 421–438; these read RRCYGCGKTGHLKRNCKQ and QKCYHCGKPGHQARNCRS. The Peptidase A2 domain maps to 492–565; sequence VKGLVDTGAD…TPVNLFGRSL (74 aa). D497 is a catalytic residue. The Reverse transcriptase domain maps to 619 to 806; it reads EGKISEAAWD…ERVKWIGFEL (188 aa). Residues 999 to 1119 enclose the RNase H type-1 domain; that stretch reads RENLTTYYTD…ADEGVKKALE (121 aa). An Integrase-type zinc finger spans residues 1199–1240; it reads ENIPSATEDHERWHTSPDILVRQFHLPKRIAKEIVARCQECK. 4 residues coordinate Zn(2+): H1208, H1212, C1236, and C1239. Residues 1248–1400 enclose the Integrase catalytic domain; the sequence is RGTNPRGRFL…TPYEIYLESE (153 aa). Residues 1419–1465 constitute a DNA-binding region (integrase-type); that stretch reads KWCYVRNRRKEWKGPYKVLWDGDGAAVIEEEGKTALYPHRHMRFIPP.

In terms of assembly, interacts with host light chain cytoplasmic dynein DYNLL1; this interaction is critical for intracellular microtubule-dependent viral genome transport. Post-translationally, specific enzymatic cleavages by the viral protease yield mature proteins. The protease is released by autocatalytic cleavage. The polyprotein is cleaved during and after budding, this process is termed maturation.

Its subcellular location is the virion. The catalysed reaction is DNA(n) + a 2'-deoxyribonucleoside 5'-triphosphate = DNA(n+1) + diphosphate. The enzyme catalyses Endohydrolysis of RNA in RNA/DNA hybrids. Three different cleavage modes: 1. sequence-specific internal cleavage of RNA. Human immunodeficiency virus type 1 and Moloney murine leukemia virus enzymes prefer to cleave the RNA strand one nucleotide away from the RNA-DNA junction. 2. RNA 5'-end directed cleavage 13-19 nucleotides from the RNA end. 3. DNA 3'-end directed cleavage 15-20 nucleotides away from the primer terminus.. It catalyses the reaction 3'-end directed exonucleolytic cleavage of viral RNA-DNA hybrid.. In terms of biological role, matrix protein p16 forms the outer shell of the core of the virus, lining the inner surface of the viral membrane. Its function is as follows. Capsid protein p26 forms the conical core of the virus that encapsulates the genomic RNA-nucleocapsid complex. Interaction between incoming particle-associated Gag proteins and host dynein allows intracellular microtubule-dependent virus transport toward the perinuclear region, prior to nucleus translocation and integration into host genome. The aspartyl protease mediates proteolytic cleavages of Gag and Gag-Pol polyproteins during or shortly after the release of the virion from the plasma membrane. Cleavages take place as an ordered, step-wise cascade to yield mature proteins. This process is called maturation. Displays maximal activity during the budding process just prior to particle release from the cell. Functionally, reverse transcriptase/ribonuclease H (RT) is a multifunctional enzyme that converts the viral RNA genome into dsDNA in the cytoplasm, shortly after virus entry into the cell. This enzyme displays a DNA polymerase activity that can copy either DNA or RNA templates, and a ribonuclease H (RNase H) activity that cleaves the RNA strand of RNA-DNA heteroduplexes in a partially processive 3' to 5' endonucleasic mode. Conversion of viral genomic RNA into dsDNA requires many steps. A tRNA binds to the primer-binding site (PBS) situated at the 5'-end of the viral RNA. RT uses the 3' end of the tRNA primer to perform a short round of RNA-dependent minus-strand DNA synthesis. The reading proceeds through the U5 region and ends after the repeated (R) region which is present at both ends of viral RNA. The portion of the RNA-DNA heteroduplex is digested by the RNase H, resulting in a ssDNA product attached to the tRNA primer. This ssDNA/tRNA hybridizes with the identical R region situated at the 3' end of viral RNA. This template exchange, known as minus-strand DNA strong stop transfer, can be either intra- or intermolecular. RT uses the 3' end of this newly synthesized short ssDNA to perform the RNA-dependent minus-strand DNA synthesis of the whole template. RNase H digests the RNA template except for a polypurine tract (PPT) situated at the 5'-end of the genome. It is not clear if both polymerase and RNase H activities are simultaneous. RNase H probably can proceed both in a polymerase-dependent (RNA cut into small fragments by the same RT performing DNA synthesis) and a polymerase-independent mode (cleavage of remaining RNA fragments by free RTs). Secondly, RT performs DNA-directed plus-strand DNA synthesis using the PPT that has not been removed by RNase H as primer. PPT and tRNA primers are then removed by RNase H. The 3' and 5' ssDNA PBS regions hybridize to form a circular dsDNA intermediate. Strand displacement synthesis by RT to the PBS and PPT ends produces a blunt ended, linear dsDNA copy of the viral genome that includes long terminal repeats (LTRs) at both ends. In terms of biological role, integrase catalyzes viral DNA integration into the host chromosome, by performing a series of DNA cutting and joining reactions. This enzyme activity takes place after virion entry into a cell and reverse transcription of the RNA genome in dsDNA. This is Gag-Pol polyprotein (gag-pol) from Bovine immunodeficiency virus (strain R29) (BIV).